The following is a 3637-amino-acid chain: Replicase polyprotein 1ab (3637 aa).

The C4-type; atypical zinc finger occupies 8-28 (CLCTPNARVFWERGQVYCTRC). Residues 69–181 (ECRPGGMCWL…KGLCPFADAR (113 aa)) enclose the Peptidase C31 domain. Positions 69 to 183 (ECRPGGMCWL…LCPFADARAN (115 aa)) are PCP1-alpha. Catalysis depends on for Nsp1-alpha papain-like cysteine proteinase activity residues C76 and H147. The PCP1-beta stretch occupies residues 262 to 380 (RDTKFSKCWE…KFRFQTRKYY (119 aa)). The 120-residue stretch at 262 to 381 (RDTKFSKCWE…FRFQTRKYYG (120 aa)) folds into the Peptidase C32 domain. Active-site for Nsp1-beta papain-like cysteine proteinase activity residues include C269 and H340. Residues 381–486 (GYSPPGDGAC…RGVCGECEMG (106 aa)) enclose the Peptidase C33 domain. Residues C390 and H456 each act as for Nsp2 cysteine proteinase activity in the active site. Disordered stretches follow at residues 676-743 (CKPK…AALK) and 865-899 (QQKT…GVSL). Over residues 678–689 (PKRKRSRKKKTR) the composition is skewed to basic residues. 2 stretches are compositionally biased toward basic and acidic residues: residues 714 to 727 (DTRE…KAEK) and 873 to 895 (GERE…KRDL). Transmembrane regions (helical) follow at residues 940-960 (WLNH…SFIF), 981-1001 (VLLC…CVFG), 1083-1103 (FYFL…AVAL), 1287-1307 (IADF…SAWL), 1362-1382 (ALMV…SLLV), 1390-1410 (CLLM…PFVL), and 1423-1443 (VQFF…VVLI). Residues 979–1103 (CCVLLCFYLP…LGLVFLAVAL (125 aa)) form an HD1 region. The segment at 1287-1446 (IADFVCLGLY…ASVVVLISSW (160 aa)) is HD2. Residues 1511-1712 (GSLRTRGCAK…AVVESLPALE (202 aa)) form the Peptidase S32 domain. Residues H1549, D1574, and S1626 each act as charge relay system; for 3C-like serine proteinase activity in the active site. 5 helical membrane-spanning segments follow: residues 1735 to 1755 (DVPV…VMLA), 1761 to 1781 (FALS…AVAF), 1801 to 1821 (LVIA…LGQL), 1824 to 1844 (CCLM…LYLG), and 1853 to 1873 (EIFF…SLFK). Positions 1735–1872 (DVPVIRIAFF…MFLPLFLSLF (138 aa)) are HD3. The region spanning 2214 to 2372 (SLNGLQQASA…LPYKLHPVRG (159 aa)) is the NiRAN domain. The RdRp catalytic domain occupies 2611-2745 (GRCLEADLAS…YDESSELPNY (135 aa)). Residues 2865-2928 (KKKCRTCAHC…SPVMSLNTEL (64 aa)) form the AV ZBD domain. Positions 2871, 2874, 2884, 2889, 2892, 2894, 2896, 2898, 2905, 2907, 2914, and 2917 each coordinate Zn(2+). Residues 2985 to 3137 (QVMKVAQTCA…AFALMLGRQL (153 aa)) enclose the (+)RNA virus helicase ATP-binding domain. Residue 3013–3020 (GAPGTGKT) coordinates ATP. In terms of domain architecture, (+)RNA virus helicase C-terminal spans 3138 to 3269 (IEVFRFGPSI…CGEQPMMISE (132 aa)). The region spanning 3293–3389 (EGTASPLPQV…LTKFLKGKPV (97 aa)) is the AV-Nsp11N/CoV-Nsp15M domain. Residues 3391–3513 (LPDSLMSTGR…MVWKDATAYF (123 aa)) form the NendoU domain. Catalysis depends on residues H3422, H3437, and K3466.

This sequence belongs to the arteriviridae polyprotein family. Specific enzymatic cleavages in vivo by its own proteases yield mature proteins. There are two alternative pathways for processing. Either nsp4-5 is cleaved, which represents the major pathway or the nsp5-6 and nsp6-7 are processed, which represents the minor pathway. The major pathway occurs when nsp2 acts as a cofactor for nsp4.

The protein localises to the host membrane. It localises to the host cytoplasm. Its subcellular location is the host perinuclear region. The enzyme catalyses RNA(n) + a ribonucleoside 5'-triphosphate = RNA(n+1) + diphosphate. It catalyses the reaction ATP + H2O = ADP + phosphate + H(+). It carries out the reaction uridylyl-uridylyl-ribonucleotide-RNA = a 3'-end uridylyl-2',3'-cyclophospho-uridine-RNA + a 5'-end dephospho-ribonucleoside-RNA. Its function is as follows. The replicase polyprotein 1ab is a multifunctional protein: it contains the activities necessary for the transcription of negative stranded RNA, leader RNA, subgenomic mRNAs and progeny virion RNA as well as proteinases responsible for the cleavage of the polyprotein into functional products. Functionally, the Nsp1 chain is essential for viral subgenomic mRNA synthesis. The 3C-like serine proteinase chain is responsible for the majority of cleavages as it cleaves the C-terminus of the polyprotein. In terms of biological role, the helicase chain, which contains a zinc finger structure, displays RNA and DNA duplex-unwinding activities with 5' to 3' polarity. Its function is as follows. Plays a role in viral transcription/replication and prevents the simultaneous activation of host cell dsRNA sensors, such as MDA5/IFIH1, OAS, and PKR. Acts by degrading the 5'-polyuridines generated during replication of the poly(A) region of viral genomic and subgenomic RNAs. Catalyzes a two-step reaction in which a 2'3'-cyclic phosphate (2'3'-cP) is first generated by 2'-O transesterification, which is then hydrolyzed to a 3'-phosphate (3'-P). If not degraded, poly(U) RNA would hybridize with poly(A) RNA tails and activate host dsRNA sensors. The sequence is that of Replicase polyprotein 1ab (rep) from Mus musculus domesticus (western European house mouse).